The chain runs to 207 residues: Microtubule-associated protein Jupiter (207 aa).

Phosphoserine is present on Ser30. Thr41 and Thr102 each carry phosphothreonine. Residues Ser111, Ser138, and Ser149 each carry the phosphoserine modification. Disordered stretches follow at residues 129 to 174 (KGKY…YKAG) and 188 to 207 (GNQV…SGLW). Residues 136-149 (SGSVSSASSSVSSS) are compositionally biased toward low complexity. Positions 150-164 (TENLKINVGNRSDGN) are enriched in polar residues.

This sequence belongs to the MAP Jupiter family.

It is found in the nucleus. The protein resides in the cytoplasm. It localises to the cytoskeleton. The protein localises to the spindle. Binds to all microtubule populations. The protein is Microtubule-associated protein Jupiter of Drosophila grimshawi (Hawaiian fruit fly).